The primary structure comprises 302 residues: Nucleotide-binding protein Rsph17025_2562 (302 aa).

An ATP-binding site is contributed by 15 to 22 (GPSGAGRT). 62 to 65 (DVRN) lines the GTP pocket.

Belongs to the RapZ-like family.

Its function is as follows. Displays ATPase and GTPase activities. The sequence is that of Nucleotide-binding protein Rsph17025_2562 from Cereibacter sphaeroides (strain ATCC 17025 / ATH 2.4.3) (Rhodobacter sphaeroides).